A 1230-amino-acid chain; its full sequence is ABC transporter B family member 5 (1230 aa).

6 helical membrane passes run 27-47, 78-98, 154-174, 177-197, 253-273, and 286-306; these read VLLM…SPLM, LVYL…CWMI, FIQL…RGWL, LVML…AIIV, GFVT…TYAL, and GYTG…SIAL. In terms of domain architecture, ABC transmembrane type-1 1 spans 30 to 318; sequence MIVGSIGAIA…ASPCLTAFTA (289 aa). Residues 353–589 enclose the ABC transporter 1 domain; that stretch reads IELRDVCFSY…HEGAYSQLLR (237 aa). Residue 388–395 coordinates ATP; the sequence is GESGSGKS. Asn-540, Asn-615, and Asn-616 each carry an N-linked (GlcNAc...) asparagine glycan. The tract at residues 602–621 is disordered; sequence ISDGSISSGSSRGNNSTRQD. Residues 603–617 show a composition bias toward low complexity; it reads SDGSISSGSSRGNNS. A run of 2 helical transmembrane segments spans residues 662–682 and 707–727; these read ILIL…IFGI and MIFV…NYLF. The ABC transmembrane type-1 2 domain occupies 663–950; the sequence is LILGTLVGAV…ASSFAPDSSK (288 aa). N-linked (GlcNAc...) asparagine glycosylation is present at Asn-759. 3 consecutive transmembrane segments (helical) span residues 798–818, 889–909, and 924–944; these read IIAF…IPFI, GVGF…CFYV, and VFQV…ASSF. One can recognise an ABC transporter 2 domain in the interval 985–1223; the sequence is IELCHISFTY…EGGVYASLVQ (239 aa). Residue 1020–1027 participates in ATP binding; that stretch reads GESGSGKS. N-linked (GlcNAc...) asparagine glycans are attached at residues Asn-1074, Asn-1174, and Asn-1227.

Belongs to the ABC transporter superfamily. ABCB family. Multidrug resistance exporter (TC 3.A.1.201) subfamily.

It is found in the membrane. This Arabidopsis thaliana (Mouse-ear cress) protein is ABC transporter B family member 5 (ABCB5).